The sequence spans 97 residues: Aspartyl/glutamyl-tRNA(Asn/Gln) amidotransferase subunit C (97 aa).

Belongs to the GatC family. In terms of assembly, heterotrimer of A, B and C subunits.

The enzyme catalyses L-glutamyl-tRNA(Gln) + L-glutamine + ATP + H2O = L-glutaminyl-tRNA(Gln) + L-glutamate + ADP + phosphate + H(+). It catalyses the reaction L-aspartyl-tRNA(Asn) + L-glutamine + ATP + H2O = L-asparaginyl-tRNA(Asn) + L-glutamate + ADP + phosphate + 2 H(+). In terms of biological role, allows the formation of correctly charged Asn-tRNA(Asn) or Gln-tRNA(Gln) through the transamidation of misacylated Asp-tRNA(Asn) or Glu-tRNA(Gln) in organisms which lack either or both of asparaginyl-tRNA or glutaminyl-tRNA synthetases. The reaction takes place in the presence of glutamine and ATP through an activated phospho-Asp-tRNA(Asn) or phospho-Glu-tRNA(Gln). In Listeria monocytogenes serotype 4b (strain CLIP80459), this protein is Aspartyl/glutamyl-tRNA(Asn/Gln) amidotransferase subunit C.